The primary structure comprises 134 residues: Thioredoxin H2-2 (134 aa).

The tract at residues Met-1 to Asp-20 is disordered. The Thioredoxin domain maps to Ser-3–Ser-130. Active-site nucleophile residues include Cys-56 and Cys-59. An intrachain disulfide couples Cys-56 to Cys-59.

This sequence belongs to the thioredoxin family. Plant H-type subfamily.

The protein resides in the cytoplasm. Probable thiol-disulfide oxidoreductase that may be involved in the redox regulation of a number of cytosolic enzymes. This chain is Thioredoxin H2-2, found in Oryza sativa subsp. japonica (Rice).